Reading from the N-terminus, the 404-residue chain is tRNA N6-adenosine threonylcarbamoyltransferase, mitochondrial (404 aa).

The N-terminal 27 residues, 1–27, are a transit peptide targeting the mitochondrion; the sequence is MFQSCLPGALRSWSRGVFSTSTRPRLV. A divalent metal cation-binding residues include H135 and H139. Substrate contacts are provided by residues 157–161, D190, G210, E214, 317–318, and T345; these read LVSGG and SN. Residue D346 participates in a divalent metal cation binding.

Belongs to the KAE1 / TsaD family. Monomer. It depends on a divalent metal cation as a cofactor.

It is found in the mitochondrion. It catalyses the reaction L-threonylcarbamoyladenylate + adenosine(37) in tRNA = N(6)-L-threonylcarbamoyladenosine(37) in tRNA + AMP + H(+). Required for the formation of a threonylcarbamoyl group on adenosine at position 37 (t(6)A37) in mitochondrial tRNAs that read codons beginning with adenine. Probably involved in the transfer of the threonylcarbamoyl moiety of threonylcarbamoyl-AMP (TC-AMP) to the N6 group of A37. Involved in mitochondrial genome maintenance. The polypeptide is tRNA N6-adenosine threonylcarbamoyltransferase, mitochondrial (Danio rerio (Zebrafish)).